Consider the following 283-residue polypeptide: Homeobox protein Hox-C12b (283 aa).

Positions Thr215–Leu274 form a DNA-binding region, homeobox.

The protein belongs to the Abd-B homeobox family.

It localises to the nucleus. Functionally, sequence-specific transcription factor which is part of a developmental regulatory system that provides cells with specific positional identities on the anterior-posterior axis. This is Homeobox protein Hox-C12b (hoxc12b) from Danio rerio (Zebrafish).